The primary structure comprises 94 residues: Small nuclear ribonucleoprotein E (94 aa).

The region spanning 14–94 (INCIFNFLQQ…DNITLITSAD (81 aa)) is the Sm domain.

Belongs to the snRNP Sm proteins family. In terms of assembly, component of the Sm core complex, present in spliceosomal snRNP U1, U2, U4/U6 and U5. The core complex contains SMB1, SMD1, SMD2, SMD3, SME1, SMX3 and SMX2 (Sm proteins B, D1, D2, D3, E, F and G, respectively), and is probably a heptameric ring structure. SME1 specifically interacts with SMX2 and SMX3. Component of the U4/U6-U5 tri-snRNP complex composed of the U4, U6 and U5 snRNAs and at least PRP3, PRP4, PRP6, PRP8, PRP18, PRP31, PRP38, SNU13, SNU23, SNU66, SNU114, SPP381, SMB1, SMD1, SMD2, SMD3, SMX2, SMX3, LSM2, LSM3, LSM4, LSM5, LSM6, LSM7, LSM8, BRR2 and DIB1.

It localises to the cytoplasm. The protein resides in the nucleus. Functionally, involved in pre-mRNA splicing. Binds and is required for the stability of snRNA U1, U2, U4 and U5 which contain a highly conserved structural motif called the Sm binding site. Involved in cap modification. This Saccharomyces cerevisiae (strain ATCC 204508 / S288c) (Baker's yeast) protein is Small nuclear ribonucleoprotein E (SME1).